Here is a 1977-residue protein sequence, read N- to C-terminus: Echinoderm microtubule-associated protein-like 5 (1977 aa).

WD repeat units follow at residues 59–100, 104–145, 148–187, 195–233, 235–273, 280–321, 323–362, 406–445, 449–488, and 561–601; these read GHSD…TVSV, VHTH…MLSM, GHTD…LTPK, GDLQ…RTIQ, AHTA…TVID, GYKG…LIMQ, HCEG…LIAR, DRKE…KKVG, GSLS…EVTS, and GHSA…KLKD. Positions 609–629 are disordered; that stretch reads ESLAESNSDESDSDLSDVPEL. A compositionally biased stretch (acidic residues) spans 615-629; it reads NSDESDSDLSDVPEL. WD repeat units follow at residues 725-766, 770-811, 814-853, 861-900, 901-940, 996-1035, 1038-1077, 1080-1120, and 1236-1276; these read GHDD…PLSI, YHQY…KLSV, GSKD…LIGK, GKND…KTVK, AHDG…KTYA, HMEG…CMLA, KLKK…DLVS, HRKD…RVGV, and AHST…HREK. Disordered regions lie at residues 1276-1297 and 1323-1363; these read KKYC…YDSD and PHLQ…NVGK. Residues 1281–1294 are compositionally biased toward acidic residues; it reads SEESDIDSEEDGGY. Basic and acidic residues predominate over residues 1326–1337; that stretch reads QQKEPSVDERQG. 10 WD repeats span residues 1420-1471, 1475-1516, 1519-1558, 1568-1606, 1608-1654, 1699-1739, 1741-1782, 1783-1822, 1895-1934, and 1940-1977; these read EHND…TLSI, SHSK…KIAS, GHNQ…LLSK, ARMQ…RVVA, AHNG…RAFR, GHVD…MLNK, NLGH…GKKR, DRRC…TLNR, AEKA…KFAK, and GHSP…HMPH.

It belongs to the WD repeat EMAP family.

It is found in the cytoplasm. Its subcellular location is the cytoskeleton. May modify the assembly dynamics of microtubules, such that microtubules are slightly longer, but more dynamic. The sequence is that of Echinoderm microtubule-associated protein-like 5 (Eml5) from Mus musculus (Mouse).